The primary structure comprises 797 residues: Complex I intermediate-associated protein 84, mitochondrial (797 aa).

Residues 1–69 (MRSHLARNAT…ALCTRTSKRT (69 aa)) constitute a mitochondrion transit peptide.

The protein resides in the mitochondrion. In terms of biological role, chaperone protein involved in the assembly of the mitochondrial NADH:ubiquinone oxidoreductase complex (complex I). In Neurospora crassa (strain ATCC 24698 / 74-OR23-1A / CBS 708.71 / DSM 1257 / FGSC 987), this protein is Complex I intermediate-associated protein 84, mitochondrial (cia84).